Consider the following 195-residue polypeptide: Segregation and condensation protein B (195 aa).

The protein belongs to the ScpB family. As to quaternary structure, homodimer. Homodimerization may be required to stabilize the binding of ScpA to the Smc head domains. Component of a cohesin-like complex composed of ScpA, ScpB and the Smc homodimer, in which ScpA and ScpB bind to the head domain of Smc. The presence of the three proteins is required for the association of the complex with DNA.

It localises to the cytoplasm. Functionally, participates in chromosomal partition during cell division. May act via the formation of a condensin-like complex containing Smc and ScpA that pull DNA away from mid-cell into both cell halves. The sequence is that of Segregation and condensation protein B from Clostridium perfringens (strain SM101 / Type A).